The sequence spans 175 residues: Pituitary adenylate cyclase-activating polypeptide (175 aa).

The first 24 residues, M1–C24, serve as a signal peptide directing secretion. Residues S25–D78 constitute a propeptide that is removed on maturation. Positions V149–L157 are important for receptor binding. The residue at position 157 (L157) is a Leucine amide. K168 carries the lysine amide modification. The propeptide occupies I172–L175.

Belongs to the glucagon family.

It localises to the secreted. Functionally, PACAP is a neuropeptide involved in diverse array of physiological processes through activating the PACAP subfamily of class B1 G protein-coupled receptors: VIP receptor 1 (VIPR1), VIP receptor 2 (VIPR2), and PACAP type I receptor (ADCYAP1R1). Exerts neuroprotective and general cytoprotective effects due to anti-apoptotic, anti-inflammatory, and antioxidant actions. Promotes neuron projection development through the RAPGEF2/Rap1/B-Raf/ERK pathway. In chromaffin cells, induces long-lasting increase of intracellular calcium concentrations and neuroendocrine secretion. Involved in the control of glucose homeostasis, induces insulin secretion by pancreatic beta cells. PACAP exists in two bioactive forms from proteolysis of the same precursor protein, PACAP27 and PACAP38, which differ by eleven amino acid residues in the C-terminus. In Rattus norvegicus (Rat), this protein is Pituitary adenylate cyclase-activating polypeptide (Adcyap1).